The chain runs to 138 residues: Small ribosomal subunit protein uS11 (138 aa).

Low complexity predominate over residues 1–12 (MAPKKPGAAGPK). Disordered regions lie at residues 1-27 (MAPK…NVPH) and 119-138 (ISDV…RRRV). The span at 13–22 (KAQKTRRREK) shows a compositional bias: basic residues.

The protein belongs to the universal ribosomal protein uS11 family. In terms of assembly, part of the 30S ribosomal subunit. Interacts with proteins S7 and S18. Binds to IF-3.

Functionally, located on the platform of the 30S subunit, it bridges several disparate RNA helices of the 16S rRNA. Forms part of the Shine-Dalgarno cleft in the 70S ribosome. The chain is Small ribosomal subunit protein uS11 from Mycobacteroides abscessus (strain ATCC 19977 / DSM 44196 / CCUG 20993 / CIP 104536 / JCM 13569 / NCTC 13031 / TMC 1543 / L948) (Mycobacterium abscessus).